The sequence spans 120 residues: UPF0231 protein YacL (120 aa).

Belongs to the UPF0231 family.

This Escherichia fergusonii (strain ATCC 35469 / DSM 13698 / CCUG 18766 / IAM 14443 / JCM 21226 / LMG 7866 / NBRC 102419 / NCTC 12128 / CDC 0568-73) protein is UPF0231 protein YacL.